The following is a 749-amino-acid chain: uncharacterized protein (749 aa).

Disordered regions lie at residues 1–58 (MGTV…QPSN), 124–170 (DANA…PSPL), 200–291 (SRFS…PPVS), and 385–405 (YTWS…NPST). A compositionally biased stretch (low complexity) spans 13–24 (LNNGLSSNNGSS). Polar residues-rich tracts occupy residues 149 to 159 (KSASKDSNAFN), 238 to 252 (ESKT…PSLN), 265 to 275 (LNYQNSSLNPS), and 388 to 405 (SRHS…NPST). The 86-residue stretch at 644 to 729 (KRILRKAQPH…YKTRIWMCAV (86 aa)) folds into the PSP1 C-terminal domain.

This is an uncharacterized protein from Schizosaccharomyces pombe (strain 972 / ATCC 24843) (Fission yeast).